Consider the following 522-residue polypeptide: Zinc finger protein 892 (522 aa).

Disordered stretches follow at residues 1–22 (MEPEGRGSLFEDSDLLHAGNPK) and 96–124 (AASQKHWETIPESKELTPEKDISEEESAP). The segment covering 100–116 (KHWETIPESKELTPEKD) has biased composition (basic and acidic residues). 10 consecutive C2H2-type zinc fingers follow at residues 221 to 243 (WKCNECEKAFSYYSAFVLHQRIH), 249 to 271 (YECNECGKAFSQSIHLTLHQRIH), 277 to 299 (YECHECGKAFSHRSALIRHHIIH), 305 to 327 (YECNECGKAFNQSSYLTQHQRIH), 333 to 355 (YECNECGKAFSQSTFLTQHQVIH), 361 to 383 (YKCNECGKAFSDRSGLIQHQRTH), 389 to 411 (YECNECGKAFGYCSALTQHQRTH), 417 to 439 (YKCNDCAKAFSDRSALIRHQRTH), 445 to 467 (YKCKDCGKAFSQSSSLTKHQKTH), and 473 to 495 (YKCKECGKAFSQSSSLSQHQKTH).

This sequence belongs to the krueppel C2H2-type zinc-finger protein family.

The protein localises to the nucleus. In terms of biological role, may be involved in transcriptional regulation. The protein is Zinc finger protein 892 of Homo sapiens (Human).